The sequence spans 114 residues: Probable acid stress chaperone HdeA (114 aa).

A signal peptide spans 1–26 (MIKTLFNKNTALAAVAILALSGSAMA). C46 and C94 are joined by a disulfide.

Belongs to the HdeA family.

The protein localises to the periplasm. Required for optimal acid stress protection. Exhibits a chaperone-like activity only at low pH by suppressing non-specifically the aggregation of denaturated periplasmic proteins. In Brucella ovis (strain ATCC 25840 / 63/290 / NCTC 10512), this protein is Probable acid stress chaperone HdeA.